Consider the following 583-residue polypeptide: 2-succinyl-5-enolpyruvyl-6-hydroxy-3-cyclohexene-1-carboxylate synthase (583 aa).

It belongs to the TPP enzyme family. MenD subfamily. As to quaternary structure, homodimer. Mg(2+) is required as a cofactor. The cofactor is Mn(2+). Thiamine diphosphate serves as cofactor.

It catalyses the reaction isochorismate + 2-oxoglutarate + H(+) = 5-enolpyruvoyl-6-hydroxy-2-succinyl-cyclohex-3-ene-1-carboxylate + CO2. Its pathway is quinol/quinone metabolism; 1,4-dihydroxy-2-naphthoate biosynthesis; 1,4-dihydroxy-2-naphthoate from chorismate: step 2/7. The protein operates within quinol/quinone metabolism; menaquinone biosynthesis. Catalyzes the thiamine diphosphate-dependent decarboxylation of 2-oxoglutarate and the subsequent addition of the resulting succinic semialdehyde-thiamine pyrophosphate anion to isochorismate to yield 2-succinyl-5-enolpyruvyl-6-hydroxy-3-cyclohexene-1-carboxylate (SEPHCHC). This is 2-succinyl-5-enolpyruvyl-6-hydroxy-3-cyclohexene-1-carboxylate synthase from Chlorobaculum parvum (strain DSM 263 / NCIMB 8327) (Chlorobium vibrioforme subsp. thiosulfatophilum).